A 156-amino-acid polypeptide reads, in one-letter code: Small ribosomal subunit protein uS7 (156 aa).

The protein belongs to the universal ribosomal protein uS7 family. Part of the 30S ribosomal subunit. Contacts proteins S9 and S11.

In terms of biological role, one of the primary rRNA binding proteins, it binds directly to 16S rRNA where it nucleates assembly of the head domain of the 30S subunit. Is located at the subunit interface close to the decoding center, probably blocks exit of the E-site tRNA. This is Small ribosomal subunit protein uS7 from Limosilactobacillus fermentum (strain NBRC 3956 / LMG 18251) (Lactobacillus fermentum).